Consider the following 146-residue polypeptide: Large ribosomal subunit protein uL15 (146 aa).

The tract at residues 1 to 57 (MKLHELKPAQGSRKTRNRVGRGSSSGNGKTAGRGQKGQKARSGGNIRSGFEGGQTPL) is disordered. The segment covering 23-35 (SSSGNGKTAGRGQ) has biased composition (gly residues).

It belongs to the universal ribosomal protein uL15 family. In terms of assembly, part of the 50S ribosomal subunit.

Binds to the 23S rRNA. In Streptococcus mutans serotype c (strain ATCC 700610 / UA159), this protein is Large ribosomal subunit protein uL15.